Here is a 471-residue protein sequence, read N- to C-terminus: Glutamate--tRNA ligase (471 aa).

The short motif at 9-19 (PSPTGYLHVGG) is the 'HIGH' region element. Residues cysteine 98, cysteine 100, cysteine 125, and histidine 127 each contribute to the Zn(2+) site. Positions 237–241 (KLSKR) match the 'KMSKS' region motif. Lysine 240 contributes to the ATP binding site.

The protein belongs to the class-I aminoacyl-tRNA synthetase family. Glutamate--tRNA ligase type 1 subfamily. As to quaternary structure, monomer. Zn(2+) is required as a cofactor.

It is found in the cytoplasm. It carries out the reaction tRNA(Glu) + L-glutamate + ATP = L-glutamyl-tRNA(Glu) + AMP + diphosphate. Functionally, catalyzes the attachment of glutamate to tRNA(Glu) in a two-step reaction: glutamate is first activated by ATP to form Glu-AMP and then transferred to the acceptor end of tRNA(Glu). This is Glutamate--tRNA ligase from Shigella boydii serotype 18 (strain CDC 3083-94 / BS512).